The following is a 137-amino-acid chain: MNAIDRVKKSRGINELAEQIEPLAQSMATLADEARQVMSQTQQASEAQAAEWLKAQRQTGAAWVELAKELREVAAEVSSAAQSARSASRGWHWKLWLTVMLASMMPTVVLLIASLLLLDLTPLTTEDGSIWLRLVAR.

Interacts with MobA and MobC to form the relaxosome.

This protein is essential to promote the specific transfer of the plasmid in the presence of conjugative plasmids. This chain is Mobilization protein B (mobB), found in Escherichia coli.